Here is a 710-residue protein sequence, read N- to C-terminus: Pentatricopeptide repeat-containing protein At5g39680 (710 aa).

An N-acetylserine modification is found at Ser2. PPR repeat units follow at residues 35-64 (NELL…NQSS), 68-98 (DAYQ…MPER), 99-133 (NVVS…GESR), 135-169 (NEFV…GLIS), 170-200 (HEFV…LPYC), 201-235 (DLSV…DFVW), 236-270 (NNLT…GFNA), 271-301 (EVEA…THAQ), 302-336 (NIFL…EVPP), 337-371 (NEYT…GYRN), 372-402 (HVMV…MTFR), 403-437 (DIVT…GEIP), 438-473 (NRIT…DVQP), and 474-504 (DIQH…APIE). The interval 509–584 (AWRTLLNACY…EPGVSWIGIR (76 aa)) is type E motif. Residues 585–615 (NQTHVFLAEDNQHPEITLIYAKVKEVMSKIK) form a type E(+) motif region. Positions 616–710 (PLGYSPDVAG…DGQCSCCDYW (95 aa)) are type DYW motif.

Belongs to the PPR family. PCMP-H subfamily.

In Arabidopsis thaliana (Mouse-ear cress), this protein is Pentatricopeptide repeat-containing protein At5g39680 (EMB2744).